We begin with the raw amino-acid sequence, 156 residues long: Ribosome maturation factor RimP (156 aa).

It belongs to the RimP family.

The protein resides in the cytoplasm. Its function is as follows. Required for maturation of 30S ribosomal subunits. The sequence is that of Ribosome maturation factor RimP from Bacillus velezensis (strain DSM 23117 / BGSC 10A6 / LMG 26770 / FZB42) (Bacillus amyloliquefaciens subsp. plantarum).